A 1129-amino-acid chain; its full sequence is Ubiquitin carboxyl-terminal hydrolase 7 (1129 aa).

Positions 29–169 (EGHLALDIER…DDVIRLRCRF (141 aa)) constitute an MATH domain. The USP domain maps to 190 to 500 (IGLRNQGATC…SAYMLVYVRD (311 aa)). Residue cysteine 199 is the Nucleophile of the active site. Histidine 439 serves as the catalytic Proton acceptor.

It belongs to the peptidase C19 family.

It is found in the nucleus. The catalysed reaction is Thiol-dependent hydrolysis of ester, thioester, amide, peptide and isopeptide bonds formed by the C-terminal Gly of ubiquitin (a 76-residue protein attached to proteins as an intracellular targeting signal).. Hydrolase that deubiquitinates target proteins. In Caenorhabditis briggsae, this protein is Ubiquitin carboxyl-terminal hydrolase 7.